The sequence spans 61 residues: UPF0434 protein Sama_1339 (61 aa).

This sequence belongs to the UPF0434 family.

The chain is UPF0434 protein Sama_1339 from Shewanella amazonensis (strain ATCC BAA-1098 / SB2B).